The sequence spans 337 residues: Ketol-acid reductoisomerase (NADP(+)) (337 aa).

Residues 3–183 form the KARI N-terminal Rossmann domain; it reads VEMFYDADAD…GGARAGVIKT (181 aa). Residues 26 to 29, lysine 49, serine 52, serine 54, and 84 to 87 contribute to the NADP(+) site; these read YGSQ and DTAQ. Histidine 109 is an active-site residue. Glycine 135 provides a ligand contact to NADP(+). A KARI C-terminal knotted domain is found at 184 to 329; it reads TFKEETETDL…KKLRDLMSWV (146 aa). Positions 192, 196, 228, and 232 each coordinate Mg(2+). Substrate is bound at residue serine 253.

This sequence belongs to the ketol-acid reductoisomerase family. Mg(2+) is required as a cofactor.

It catalyses the reaction (2R)-2,3-dihydroxy-3-methylbutanoate + NADP(+) = (2S)-2-acetolactate + NADPH + H(+). The enzyme catalyses (2R,3R)-2,3-dihydroxy-3-methylpentanoate + NADP(+) = (S)-2-ethyl-2-hydroxy-3-oxobutanoate + NADPH + H(+). It participates in amino-acid biosynthesis; L-isoleucine biosynthesis; L-isoleucine from 2-oxobutanoate: step 2/4. It functions in the pathway amino-acid biosynthesis; L-valine biosynthesis; L-valine from pyruvate: step 2/4. Functionally, involved in the biosynthesis of branched-chain amino acids (BCAA). Catalyzes an alkyl-migration followed by a ketol-acid reduction of (S)-2-acetolactate (S2AL) to yield (R)-2,3-dihydroxy-isovalerate. In the isomerase reaction, S2AL is rearranged via a Mg-dependent methyl migration to produce 3-hydroxy-3-methyl-2-ketobutyrate (HMKB). In the reductase reaction, this 2-ketoacid undergoes a metal-dependent reduction by NADPH to yield (R)-2,3-dihydroxy-isovalerate. This Mycolicibacterium vanbaalenii (strain DSM 7251 / JCM 13017 / BCRC 16820 / KCTC 9966 / NRRL B-24157 / PYR-1) (Mycobacterium vanbaalenii) protein is Ketol-acid reductoisomerase (NADP(+)).